Consider the following 56-residue polypeptide: Preprotein translocase subunit SecG (56 aa).

Residues 1 to 29 (MAKEKATLPPTGAGLMRFFDEDTRAVKVS) lie on the Cytoplasmic side of the membrane. Residues 30–49 (PKGVIALTLLLIAFEFILHM) traverse the membrane as a helical segment. The Extracellular segment spans residues 50–56 (FGSSIFG).

Belongs to the SEC61-beta family. In terms of assembly, component of the protein translocase complex. Heterotrimer consisting of alpha (SecY), beta (SecG) and gamma (SecE) subunits. Can form oligomers of the heterotrimer.

Its subcellular location is the cell membrane. Involved in protein export. The function of the beta subunit is unknown, but it may be involved in stabilization of the trimeric complex. The polypeptide is Preprotein translocase subunit SecG (Thermococcus kodakarensis (strain ATCC BAA-918 / JCM 12380 / KOD1) (Pyrococcus kodakaraensis (strain KOD1))).